A 541-amino-acid chain; its full sequence is Ascorbate transporter, chloroplastic (541 aa).

Residues 1–28 (MALGGLISNRNFGSFIGSGNGCQRLGKS) constitute a chloroplast transit peptide. 11 helical membrane passes run 133 to 155 (VIVL…MSIA), 170 to 190 (VGLI…LGGI), 199 to 219 (VVLG…PIAA), 221 to 241 (LGLP…GVAM), 263 to 283 (LVYS…PMLI), 286 to 306 (FGWP…FLLW), 352 to 372 (VWAL…LLTW), 390 to 410 (LLCV…GWIA), 430 to 450 (IGFL…TPAM), 481 to 501 (AGVL…FGTA), and 515 to 535 (VFKV…LFAT).

Belongs to the major facilitator superfamily. Sodium/anion cotransporter (TC 2.A.1.14) family. Expressed in stems, developing siliques, leaf mesophyll cells and sepals of mature flowers. Not detected in roots. Detected in palisade tissue rather than spongy tissue from the leaves.

The protein localises to the plastid. It is found in the chloroplast inner membrane. Insensitive to dehydroascorbate, p-isoascorbate, inorganic phosphate, glutamate, ATP, p-aminohippuric acid or tetraethylammonium. In terms of biological role, inorganic phosphate and probable anion transporter. Ascorbate transporter bridging the chloroplast envelope. Transports ascorbate from the cytosol into the chloroplast. Requires chloride ions and the presence of an electrochemical potential across the membrane for activity. This is Ascorbate transporter, chloroplastic (PHT4;4) from Arabidopsis thaliana (Mouse-ear cress).